A 401-amino-acid chain; its full sequence is Voltage-gated potassium channel subunit beta-1 (401 aa).

Residues T90, W91, Q97, and D119 each contribute to the NADP(+) site. Y124 functions as the Proton donor/acceptor in the catalytic mechanism. Residues N192, S222, R223, Q248, W277, S278, P279, L280, A281, C282, K288, R298, G357, S359, Q363, E366, and N367 each contribute to the NADP(+) site.

This sequence belongs to the shaker potassium channel beta subunit family. In terms of assembly, homotetramer. Interaction with tetrameric potassium channel alpha subunits gives rise to a heterooctamer.

It localises to the cytoplasm. Its subcellular location is the membrane. The protein localises to the cell membrane. It catalyses the reaction a primary alcohol + NADP(+) = an aldehyde + NADPH + H(+). It carries out the reaction a secondary alcohol + NADP(+) = a ketone + NADPH + H(+). In terms of biological role, regulatory subunit of the voltage-gated potassium (Kv) channels composed of pore-forming and potassium-conducting alpha subunits and of regulatory beta subunits. The beta-1/KCNAB1 cytoplasmic subunit mediates closure of delayed rectifier potassium channels by physically obstructing the pore via its N-terminal domain and increases the speed of channel closure for other family members. Promotes the inactivation of KCNA1, KCNA2, KCNA4, KCNA5 and KCNA6 alpha subunit-containing channels. Displays nicotinamide adenine dinucleotide phosphate (NADPH)-dependent aldoketoreductase activity by catalyzing the NADPH-dependent reduction of a variety of endogenous aldehydes and ketones. The binding of NADPH is required for efficient down-regulation of potassium channel activity. Oxidation of the bound NADPH restrains N-terminal domain from blocking the channel, thereby decreasing N-type inactivation of potassium channel activity. This chain is Voltage-gated potassium channel subunit beta-1 (KCNAB1), found in Gallus gallus (Chicken).